Here is a 188-residue protein sequence, read N- to C-terminus: UPF0314 protein Sala_3154 (188 aa).

Transmembrane regions (helical) follow at residues 8-28 (TGWL…IFMG), 57-77 (WYSF…RWIM), and 143-163 (MRWW…LWTI).

Belongs to the UPF0314 family.

The protein resides in the cell membrane. The sequence is that of UPF0314 protein Sala_3154 from Sphingopyxis alaskensis (strain DSM 13593 / LMG 18877 / RB2256) (Sphingomonas alaskensis).